The following is a 447-amino-acid chain: Asparagine--tRNA ligase (447 aa).

The protein belongs to the class-II aminoacyl-tRNA synthetase family. Homodimer.

The protein resides in the cytoplasm. The catalysed reaction is tRNA(Asn) + L-asparagine + ATP = L-asparaginyl-tRNA(Asn) + AMP + diphosphate + H(+). This chain is Asparagine--tRNA ligase, found in Mycoplasma mobile (strain ATCC 43663 / 163K / NCTC 11711) (Mesomycoplasma mobile).